A 117-amino-acid polypeptide reads, in one-letter code: Large ribosomal subunit protein bL20c (117 aa).

The protein belongs to the bacterial ribosomal protein bL20 family.

The protein localises to the plastid. Its subcellular location is the chloroplast. Functionally, binds directly to 23S ribosomal RNA and is necessary for the in vitro assembly process of the 50S ribosomal subunit. It is not involved in the protein synthesizing functions of that subunit. This Acorus calamus (Sweet flag) protein is Large ribosomal subunit protein bL20c.